The chain runs to 181 residues: CASP-like protein 2C1 (181 aa).

Residues 1 to 7 (MALEIPK) are Cytoplasmic-facing. A helical transmembrane segment spans residues 8–28 (IEAILRGIAILLLVSTACLVG). Over 29-49 (LDSQTKFVIVYEKEVTYKDLH) the chain is Extracellular. Residues 50–70 (ALVVLVYVDAVAAAYNLLQLC) traverse the membrane as a helical segment. The Cytoplasmic segment spans residues 71–98 (RCSVSALSKGNFKGSYRYLSWACFVLDQ). The chain crosses the membrane as a helical span at residues 99 to 119 (LAAYTTFAAHSAALQHSVLGI). Topologically, residues 120-140 (TGAKVFQWMKWCNRFTRFCFQ) are extracellular. Residues 141–161 (IGGALTCGYIASVLMVMISFI) form a helical membrane-spanning segment. At 162–181 (SAFNLFRLYSPKHFLRLKGT) the chain is on the cytoplasmic side.

Belongs to the Casparian strip membrane proteins (CASP) family. In terms of assembly, homodimer and heterodimers.

It is found in the cell membrane. The chain is CASP-like protein 2C1 from Populus trichocarpa (Western balsam poplar).